The following is a 177-amino-acid chain: Large ribosomal subunit protein uL6 (177 aa).

It belongs to the universal ribosomal protein uL6 family. In terms of assembly, part of the 50S ribosomal subunit.

Functionally, this protein binds to the 23S rRNA, and is important in its secondary structure. It is located near the subunit interface in the base of the L7/L12 stalk, and near the tRNA binding site of the peptidyltransferase center. The chain is Large ribosomal subunit protein uL6 from Sinorhizobium medicae (strain WSM419) (Ensifer medicae).